The sequence spans 202 residues: Orotate phosphoribosyltransferase (202 aa).

113 to 121 provides a ligand contact to 5-phospho-alpha-D-ribose 1-diphosphate; the sequence is EDIITTGGS. The orotate site is built by T117 and R145.

It belongs to the purine/pyrimidine phosphoribosyltransferase family. PyrE subfamily. In terms of assembly, homodimer. Requires Mg(2+) as cofactor.

The catalysed reaction is orotidine 5'-phosphate + diphosphate = orotate + 5-phospho-alpha-D-ribose 1-diphosphate. Its pathway is pyrimidine metabolism; UMP biosynthesis via de novo pathway; UMP from orotate: step 1/2. Functionally, catalyzes the transfer of a ribosyl phosphate group from 5-phosphoribose 1-diphosphate to orotate, leading to the formation of orotidine monophosphate (OMP). This Nitratiruptor sp. (strain SB155-2) protein is Orotate phosphoribosyltransferase.